Here is a 123-residue protein sequence, read N- to C-terminus: uncharacterized protein (123 aa).

This is an uncharacterized protein from Homo sapiens (Human).